The sequence spans 446 residues: Tubulin alpha-1B chain (446 aa).

Gln-11 serves as a coordination point for GTP. The disordered stretch occupies residues 34-55; that stretch reads GRLMDDSPSKHDSGSTFFSETG. A compositionally biased stretch (basic and acidic residues) spans 35–46; sequence RLMDDSPSKHDS. GTP is bound by residues Glu-69, Ser-138, Gly-142, Thr-143, Ser-177, Asn-204, and Asn-226. Glu-69 is a Mg(2+) binding site. Glu-252 is a catalytic residue.

This sequence belongs to the tubulin family. In terms of assembly, dimer of alpha and beta chains. A typical microtubule is a hollow water-filled tube with an outer diameter of 25 nm and an inner diameter of 15 nM. Alpha-beta heterodimers associate head-to-tail to form protofilaments running lengthwise along the microtubule wall with the beta-tubulin subunit facing the microtubule plus end conferring a structural polarity. Microtubules usually have 13 protofilaments but different protofilament numbers can be found in some organisms and specialized cells. Mg(2+) is required as a cofactor.

The protein resides in the cytoplasm. The protein localises to the cytoskeleton. It catalyses the reaction GTP + H2O = GDP + phosphate + H(+). Its function is as follows. Tubulin is the major constituent of microtubules, a cylinder consisting of laterally associated linear protofilaments composed of alpha- and beta-tubulin heterodimers. Microtubules grow by the addition of GTP-tubulin dimers to the microtubule end, where a stabilizing cap forms. Below the cap, tubulin dimers are in GDP-bound state, owing to GTPase activity of alpha-tubulin. The chain is Tubulin alpha-1B chain (TUB-1B) from Schizophyllum commune (Split gill fungus).